A 278-amino-acid polypeptide reads, in one-letter code: Embryonic polyadenylate-binding protein 2 (278 aa).

2 disordered regions span residues 21 to 66 (VSSD…GDAG) and 101 to 128 (EGTPRPPGVQQQAEEEEGTAAGQLLSPE). The span at 35 to 50 (ETKEILGPEGGEGKEE) shows a compositional bias: basic and acidic residues. The segment covering 51–63 (KEEEEDAEEDQDG) has biased composition (acidic residues). Residues 147–224 (RSVYVGNVDY…RVIKVLPKRT (78 aa)) form the RRM domain. Residues 227-278 (PGISSTDRGGLRGHPGSRGAPFPHSGLQGRPRLRPQGQNRARGKFSPWFSPY) are disordered.

Expressed in various adult tissues.

It is found in the cytoplasm. In terms of biological role, binds the poly(A) tail of mRNA. The polypeptide is Embryonic polyadenylate-binding protein 2 (PABPN1L) (Homo sapiens (Human)).